Consider the following 454-residue polypeptide: Carbon catabolite repressor protein 4 homolog 5 (454 aa).

The segment at 1 to 76 (MSGYERKNTT…SLRRRRRTKE (76 aa)) is disordered. A compositionally biased stretch (basic and acidic residues) spans 31 to 41 (VYEKSNRKESI). Residues 61–75 (VRHSKSSLRRRRRTK) show a composition bias toward basic residues. Residue Glu-153 participates in Mg(2+) binding.

This sequence belongs to the CCR4/nocturin family. Component of the CCR4-NOT complex, at least composed of CRR4 and CAF1 proteins. The cofactor is Mg(2+).

The protein resides in the nucleus. The protein localises to the cytoplasm. It catalyses the reaction Exonucleolytic cleavage of poly(A) to 5'-AMP.. Its function is as follows. Acts as a catalytic component of the CCR4-NOT core complex, which in the nucleus seems to be a general transcription factor, and in the cytoplasm the major mRNA deadenylase involved in mRNA turnover. This is Carbon catabolite repressor protein 4 homolog 5 (CCR4-5) from Arabidopsis thaliana (Mouse-ear cress).